A 364-amino-acid polypeptide reads, in one-letter code: Phosphoserine aminotransferase (364 aa).

Arg-41 contributes to the L-glutamate binding site. Pyridoxal 5'-phosphate-binding positions include 75 to 76 (AS), Trp-100, Thr-155, and Gln-198. The residue at position 199 (Lys-199) is an N6-(pyridoxal phosphate)lysine. Residue 239–240 (NT) coordinates pyridoxal 5'-phosphate.

The protein belongs to the class-V pyridoxal-phosphate-dependent aminotransferase family. SerC subfamily. In terms of assembly, homodimer. The cofactor is pyridoxal 5'-phosphate.

The protein resides in the cytoplasm. It catalyses the reaction O-phospho-L-serine + 2-oxoglutarate = 3-phosphooxypyruvate + L-glutamate. The enzyme catalyses 4-(phosphooxy)-L-threonine + 2-oxoglutarate = (R)-3-hydroxy-2-oxo-4-phosphooxybutanoate + L-glutamate. Its pathway is amino-acid biosynthesis; L-serine biosynthesis; L-serine from 3-phospho-D-glycerate: step 2/3. Catalyzes the reversible conversion of 3-phosphohydroxypyruvate to phosphoserine and of 3-hydroxy-2-oxo-4-phosphonooxybutanoate to phosphohydroxythreonine. This chain is Phosphoserine aminotransferase, found in Streptococcus thermophilus (strain ATCC BAA-250 / LMG 18311).